The primary structure comprises 260 residues: Cytosolic Fe-S cluster assembly factor Nubp2 homolog (260 aa).

14–21 is a binding site for ATP; it reads GKGGVGKS. Residues C188 and C191 each coordinate [4Fe-4S] cluster.

This sequence belongs to the Mrp/NBP35 ATP-binding proteins family. NUBP2/CFD1 subfamily. As to quaternary structure, heterotetramer of 2 Nubp1 and 2 Nubp2 chains. [4Fe-4S] cluster serves as cofactor.

It localises to the cytoplasm. Component of the cytosolic iron-sulfur (Fe/S) protein assembly (CIA) machinery. Required for maturation of extramitochondrial Fe-S proteins. The Nubp1-Nubp2 heterotetramer forms a Fe-S scaffold complex, mediating the de novo assembly of an Fe-S cluster and its transfer to target apoproteins. This Drosophila simulans (Fruit fly) protein is Cytosolic Fe-S cluster assembly factor Nubp2 homolog.